We begin with the raw amino-acid sequence, 21 residues long: Fibrinogen beta chain (21 aa).

Gln-1 bears the Pyrrolidone carboxylic acid mark. Positions 1-10 (QFPTDYDEGQ) are enriched in acidic residues. Residues 1-21 (QFPTDYDEGQDDRPKLGLGAR) are disordered. O-linked (GalNAc...) threonine glycosylation is present at Thr-4. A Sulfotyrosine modification is found at Tyr-6.

Heterohexamer; disulfide linked. Contains 2 sets of 3 non-identical chains (alpha, beta and gamma). The 2 heterotrimers are in head to head conformation with the N-termini in a small central domain. Conversion of fibrinogen to fibrin is triggered by thrombin, which cleaves fibrinopeptides A and B from alpha and beta chains, and thus exposes the N-terminal polymerization sites responsible for the formation of the soft clot.

The protein resides in the secreted. Functionally, cleaved by the protease thrombin to yield monomers which, together with fibrinogen alpha (FGA) and fibrinogen gamma (FGG), polymerize to form an insoluble fibrin matrix. Fibrin has a major function in hemostasis as one of the primary components of blood clots. In addition, functions during the early stages of wound repair to stabilize the lesion and guide cell migration during re-epithelialization. Was originally thought to be essential for platelet aggregation, based on in vitro studies using anticoagulated blood. However subsequent studies have shown that it is not absolutely required for thrombus formation in vivo. Enhances expression of SELP in activated platelets. Maternal fibrinogen is essential for successful pregnancy. Fibrin deposition is also associated with infection, where it protects against IFNG-mediated hemorrhage. May also facilitate the antibacterial immune response via both innate and T-cell mediated pathways. This chain is Fibrinogen beta chain (FGB), found in Bubalus bubalis (Domestic water buffalo).